The following is a 211-amino-acid chain: GTP pyrophosphokinase YjbM (211 aa).

Guanosine 3'-diphosphate 5'-triphosphate contacts are provided by residues 21 to 28, 41 to 42, and 46 to 48; these read KVKLKGIR, EF, and RVK. ATP is bound by residues 46–48, Ser-52, 56–59, Asp-72, and Arg-77; these read RVK and KARR. Arg-59 contacts guanosine 3'-diphosphate 5'-triphosphate. Mg(2+) is bound at residue Asp-72. Residues Arg-105, 112–114, and His-120 each bind guanosine 3'-diphosphate 5'-triphosphate; that span reads KES. The active-site Proton acceptor is the Glu-139. Residues Asn-148 and 151–155 each bind guanosine 3'-diphosphate 5'-triphosphate; that span reads ATIEH.

It belongs to the RelA/SpoT family. In terms of assembly, homotetramer.

It carries out the reaction GTP + ATP = guanosine 3'-diphosphate 5'-triphosphate + AMP. The catalysed reaction is GDP + ATP = guanosine 3',5'-bis(diphosphate) + AMP. It functions in the pathway purine metabolism; ppGpp biosynthesis; ppGpp from GTP: step 1/2. Allosterically regulated by its own products; pppGpp simulates synthesis 10-fold more than ppGpp. 2 pppGpp molecules bind in a regulatory cleft in the middle of the tetramer in an asymmetric manner. There is a specific contact of Lys-25 to the gamma-phosphate of pppGpp, explaining why pppGpp stimulates activity but ppGpp does not. Functions as a (p)ppGpp synthase; GDP can be used instead of GTP, resulting in an increase of (p)ppGpp synthesis. The enzyme binds ATP, then GDP or GTP and catalysis is highly cooperative. In eubacteria ppGpp (guanosine 3'-diphosphate 5'-diphosphate) is a mediator of the stringent response that coordinates a variety of cellular activities in response to changes in nutritional abundance. Probably has a minor role in the stringent response. The protein is GTP pyrophosphokinase YjbM (yjbM) of Bacillus subtilis (strain 168).